The sequence spans 118 residues: Large ribosomal subunit protein eL18 (118 aa).

The protein belongs to the eukaryotic ribosomal protein eL18 family.

The sequence is that of Large ribosomal subunit protein eL18 from Nanoarchaeum equitans (strain Kin4-M).